Reading from the N-terminus, the 591-residue chain is Metalloendopeptidase OPG085 (591 aa).

Position 41 (His-41) interacts with Zn(2+). Glu-44 is an active-site residue. His-45 serves as a coordination point for Zn(2+).

The protein belongs to the peptidase M44 family. It depends on Zn(2+) as a cofactor. In terms of processing, undergoes proteolytic processing during the course of infection. May be cleaved into 46 kDa and 22 kDa products (Potential).

The protein resides in the virion. In terms of biological role, probably involved in maturation of some viral proteins by processing them preferentially at Ala-Gly-|-Ser/Thr/Lys motifs. Does not seem to be responsible for the cleavage of major core proteins. The protein is Metalloendopeptidase OPG085 (OPG085) of Homo sapiens (Human).